The following is a 215-amino-acid chain: Orotate phosphoribosyltransferase (215 aa).

Lysine 25 contributes to the 5-phospho-alpha-D-ribose 1-diphosphate binding site. 33-34 contacts orotate; it reads FF. 5-phospho-alpha-D-ribose 1-diphosphate-binding positions include 71 to 72, arginine 98, lysine 99, lysine 102, histidine 104, and 124 to 132; these read YK and DDVITAGTA. The orotate site is built by threonine 128 and arginine 156.

Belongs to the purine/pyrimidine phosphoribosyltransferase family. PyrE subfamily. Homodimer.

The enzyme catalyses orotidine 5'-phosphate + diphosphate = orotate + 5-phospho-alpha-D-ribose 1-diphosphate. It functions in the pathway pyrimidine metabolism; UMP biosynthesis via de novo pathway; UMP from orotate: step 1/2. Its function is as follows. Catalyzes the transfer of a ribosyl phosphate group from 5-phosphoribose 1-diphosphate to orotate, leading to the formation of orotidine monophosphate (OMP). The sequence is that of Orotate phosphoribosyltransferase (ura5) from Schizosaccharomyces pombe (strain 972 / ATCC 24843) (Fission yeast).